The primary structure comprises 338 residues: tRNA-specific 2-thiouridylase MnmA (338 aa).

ATP contacts are provided by residues 6–13 (AMSGGVDS) and methionine 32. The active-site Nucleophile is the cysteine 92. Residues cysteine 92 and cysteine 186 are joined by a disulfide bond. Residue glycine 116 participates in ATP binding. An interaction with tRNA region spans residues 134–136 (KDQ). Catalysis depends on cysteine 186, which acts as the Cysteine persulfide intermediate. Positions 288 to 289 (RY) are interaction with tRNA.

The protein belongs to the MnmA/TRMU family.

It is found in the cytoplasm. The catalysed reaction is S-sulfanyl-L-cysteinyl-[protein] + uridine(34) in tRNA + AH2 + ATP = 2-thiouridine(34) in tRNA + L-cysteinyl-[protein] + A + AMP + diphosphate + H(+). Catalyzes the 2-thiolation of uridine at the wobble position (U34) of tRNA, leading to the formation of s(2)U34. The sequence is that of tRNA-specific 2-thiouridylase MnmA from Campylobacter jejuni subsp. jejuni serotype O:2 (strain ATCC 700819 / NCTC 11168).